Here is a 123-residue protein sequence, read N- to C-terminus: Proteasome assembly chaperone 4 (123 aa).

It belongs to the PSMG4 family. Interacts with PSMG3. Associates with alpha subunits of the 20S proteasome.

Functionally, chaperone protein which promotes assembly of the 20S proteasome. The polypeptide is Proteasome assembly chaperone 4 (Psmg4) (Mus musculus (Mouse)).